The sequence spans 500 residues: Protein PIGMENT DEFECTIVE 338, chloroplastic (500 aa).

The N-terminal 63 residues, 1 to 63 (MQTLLCQPCK…FAFRGFSICR (63 aa)), are a transit peptide targeting the chloroplast. S1 motif domains are found at residues 156–265 (KPGD…LSSR), 283–351 (NEPI…LSEK), and 362–431 (GTLL…LSIA).

This sequence belongs to the bacterial ribosomal protein bS1 family. As to quaternary structure, interacts with CRP1 and PRFB3. As to expression, present in leaves (at protein level). Confined to leaf chlorenchyma cells.

The protein resides in the plastid. It is found in the chloroplast. Functionally, RNA-binding protein that acts as an RNA chaperone to remodel RNA structure and activates their translation. Required for seed pigmentation. Necessary for chloroplast development and subsequent photosynthetic electron flow, as well as for non-photochemical quenching (NPQ). Rubisco regulatory factor which regulates the concerted biogenesis of NDH, PSI (including PsaA, PsaB, PsaD, PsaF, PsaL, PsaG, PsaK and NdhH) and Cytb(6)f (including PetA, PetB, PetC and PetD) complexes. Binds specifically to and involved in the post-transcriptional regulation of plastid-encoded mRNAs (e.g. rbcL, petA, petB, petD and Ycf1), thus modulating expression, cellular localization/compartmentalization, and photosynthetic function. The sequence is that of Protein PIGMENT DEFECTIVE 338, chloroplastic from Arabidopsis thaliana (Mouse-ear cress).